The primary structure comprises 162 residues: HTH-type transcriptional regulator IscR (162 aa).

The 130-residue stretch at 2–131 folds into the HTH rrf2-type domain; the sequence is RLTSKGRYAV…NNITLGELVN (130 aa). A DNA-binding region (H-T-H motif) is located at residues 28-51; the sequence is LADISERQGISLSYLEQLFSRLRK. [2Fe-2S] cluster-binding residues include C92, C98, and C104.

It depends on [2Fe-2S] cluster as a cofactor.

In terms of biological role, regulates the transcription of several operons and genes involved in the biogenesis of Fe-S clusters and Fe-S-containing proteins. This Shigella sonnei (strain Ss046) protein is HTH-type transcriptional regulator IscR.